Consider the following 98-residue polypeptide: NADH-ubiquinone oxidoreductase chain 4L (98 aa).

The next 3 helical transmembrane spans lie at 1–21 (MSMV…GLLM), 29–49 (SLLC…VTIL), and 61–81 (IILL…LVMV).

This sequence belongs to the complex I subunit 4L family. Core subunit of respiratory chain NADH dehydrogenase (Complex I) which is composed of 45 different subunits.

The protein localises to the mitochondrion inner membrane. The catalysed reaction is a ubiquinone + NADH + 5 H(+)(in) = a ubiquinol + NAD(+) + 4 H(+)(out). In terms of biological role, core subunit of the mitochondrial membrane respiratory chain NADH dehydrogenase (Complex I) which catalyzes electron transfer from NADH through the respiratory chain, using ubiquinone as an electron acceptor. Part of the enzyme membrane arm which is embedded in the lipid bilayer and involved in proton translocation. This chain is NADH-ubiquinone oxidoreductase chain 4L (MT-ND4L), found in Pusa hispida (Ringed seal).